Consider the following 159-residue polypeptide: Probable acetolactate synthase small subunit (159 aa).

An ACT domain is found at 4–78; that stretch reads TIAVLVENKP…ETIKVSEITE (75 aa).

This sequence belongs to the acetolactate synthase small subunit family. As to quaternary structure, dimer of large and small chains.

The catalysed reaction is 2 pyruvate + H(+) = (2S)-2-acetolactate + CO2. The protein operates within amino-acid biosynthesis; L-isoleucine biosynthesis; L-isoleucine from 2-oxobutanoate: step 1/4. Its pathway is amino-acid biosynthesis; L-valine biosynthesis; L-valine from pyruvate: step 1/4. The sequence is that of Probable acetolactate synthase small subunit (ilvH) from Archaeoglobus fulgidus (strain ATCC 49558 / DSM 4304 / JCM 9628 / NBRC 100126 / VC-16).